The primary structure comprises 103 residues: UPF0145 protein BCE33L0904 (103 aa).

The protein belongs to the UPF0145 family.

The sequence is that of UPF0145 protein BCE33L0904 from Bacillus cereus (strain ZK / E33L).